A 94-amino-acid polypeptide reads, in one-letter code: Co-chaperonin GroES (94 aa).

This sequence belongs to the GroES chaperonin family. In terms of assembly, heptamer of 7 subunits arranged in a ring. Interacts with the chaperonin GroEL.

It localises to the cytoplasm. In terms of biological role, together with the chaperonin GroEL, plays an essential role in assisting protein folding. The GroEL-GroES system forms a nano-cage that allows encapsulation of the non-native substrate proteins and provides a physical environment optimized to promote and accelerate protein folding. GroES binds to the apical surface of the GroEL ring, thereby capping the opening of the GroEL channel. The polypeptide is Co-chaperonin GroES (Parageobacillus thermoglucosidasius (Geobacillus thermoglucosidasius)).